Consider the following 117-residue polypeptide: Large ribosomal subunit protein bL20c (117 aa).

Belongs to the bacterial ribosomal protein bL20 family.

It is found in the plastid. It localises to the chloroplast. Binds directly to 23S ribosomal RNA and is necessary for the in vitro assembly process of the 50S ribosomal subunit. It is not involved in the protein synthesizing functions of that subunit. This chain is Large ribosomal subunit protein bL20c, found in Thalassiosira pseudonana (Marine diatom).